A 198-amino-acid chain; its full sequence is MSKVLILKSSILGGYSQSAVLIDHLASHWETQGAAITVRDLGGKDVLPMVDGEIASGLRGGAELSVRQQEMLALSDTLVAELKANDTIVIAAPMYNFTIPAQLKNWIDFIARAGVTFTYTETGPKGLVEGKRAVLVTTRGGAHKDGPTDHVVPYLKTVLGFIGITNVEVVYAEALNMGPEAHDKGMSEAKHSIDQLKA.

Residues Ser-10, Ser-16 to Ser-18, Met-94 to Phe-97, and Thr-138 to Gly-141 contribute to the FMN site.

It belongs to the azoreductase type 1 family. Homodimer. It depends on FMN as a cofactor.

The enzyme catalyses 2 a quinone + NADH + H(+) = 2 a 1,4-benzosemiquinone + NAD(+). It catalyses the reaction N,N-dimethyl-1,4-phenylenediamine + anthranilate + 2 NAD(+) = 2-(4-dimethylaminophenyl)diazenylbenzoate + 2 NADH + 2 H(+). Quinone reductase that provides resistance to thiol-specific stress caused by electrophilic quinones. Its function is as follows. Also exhibits azoreductase activity. Catalyzes the reductive cleavage of the azo bond in aromatic azo compounds to the corresponding amines. This Shewanella baltica (strain OS185) protein is FMN-dependent NADH:quinone oxidoreductase.